A 133-amino-acid polypeptide reads, in one-letter code: DNA-directed RNA polymerases I, II, and III subunit rpabc2 (133 aa).

Acidic residues predominate over residues 1-32; the sequence is MADFEGGGDDGGYEEFDEGGGFEEEYVEETET. The interval 1–55 is disordered; sequence MADFEGGGDDGGYEEFDEGGGFEEEYVEETETTEAYTDIIDPSADANTAEAGRIP.

This sequence belongs to the archaeal Rpo6/eukaryotic RPB6 RNA polymerase subunit family. In terms of assembly, component of the RNA polymerase I (Pol I), RNA polymerase II (Pol II) and RNA polymerase III (Pol III) complexes consisting of at least 13, 12 and 17 subunits, respectively.

It localises to the nucleus. DNA-dependent RNA polymerases catalyze the transcription of DNA into RNA using the four ribonucleoside triphosphates as substrates. Common component of RNA polymerases I, II and III which synthesize ribosomal RNA precursors, mRNA precursors and many functional non-coding RNAs, and small RNAs, such as 5S rRNA and tRNAs, respectively. Pol II is the central component of the basal RNA polymerase II transcription machinery. Pols are composed of mobile elements that move relative to each other. In Pol II, RPB6 is part of the clamp element and together with parts of RPB1 and RPB2 forms a pocket to which the RPB4-RPB7 subcomplex binds. This Dictyostelium discoideum (Social amoeba) protein is DNA-directed RNA polymerases I, II, and III subunit rpabc2 (polr2f).